A 219-amino-acid chain; its full sequence is Leukocyte surface antigen CD53 (219 aa).

Topologically, residues 2 to 11 are cytoplasmic; sequence GMSSLKLLKY. A helical transmembrane segment spans residues 12 to 32; it reads VLFFFNFLFWVCGCCILGFGI. Residues 33–54 are Extracellular-facing; it reads HLLVQNTYGILFRNLPFLTLGN. A helical transmembrane segment spans residues 55–69; it reads VLVIVGSIIMVVAFL. The Cytoplasmic portion of the chain corresponds to 70–80; sequence GCMGSIKENKC. The helical transmembrane segment at 81-106 threads the bilayer; it reads LLMSFFVLLLLILLAEVTLAILLFVY. The Extracellular portion of the chain corresponds to 107 to 181; it reads EKKINTLVAE…KKGQAWFHSN (75 aa). N-linked (GlcNAc...) asparagine glycosylation is found at Asn-119, Asn-129, and Asn-148. A helical membrane pass occupies residues 182 to 206; sequence FLYIGIVTICVCVIQVLGMSFALTL. Residues 207 to 219 lie on the Cytoplasmic side of the membrane; it reads NCQIDKTSQALGL.

The protein belongs to the tetraspanin (TM4SF) family. As to quaternary structure, interacts with SCIMP. Interacts with CD45/PTPRC. Interacts with IL7R. Interacts with RBL2 and PPP2CA. As to expression, spleen and thymus, B-cells, monocytes, macrophages, neutrophils, single (CD4 or CD8) positive thymocytes, peripheral T-cells.

Its subcellular location is the cell membrane. The protein localises to the cell junction. It is found in the membrane. In terms of biological role, required for efficient formation of myofibers in regenerating muscle at the level of cell fusion. May be involved in growth regulation in hematopoietic cells. The chain is Leukocyte surface antigen CD53 (Cd53) from Rattus norvegicus (Rat).